The sequence spans 255 residues: Pyridoxine 5'-phosphate synthase (255 aa).

N12 provides a ligand contact to 3-amino-2-oxopropyl phosphate. 14-15 (DH) lines the 1-deoxy-D-xylulose 5-phosphate pocket. R23 provides a ligand contact to 3-amino-2-oxopropyl phosphate. The active-site Proton acceptor is H48. 2 residues coordinate 1-deoxy-D-xylulose 5-phosphate: R50 and H55. The active-site Proton acceptor is the E75. T105 serves as a coordination point for 1-deoxy-D-xylulose 5-phosphate. H199 (proton donor) is an active-site residue. Residues G200 and 221-222 (GF) each bind 3-amino-2-oxopropyl phosphate.

This sequence belongs to the PNP synthase family. As to quaternary structure, homooctamer; tetramer of dimers.

It localises to the cytoplasm. The enzyme catalyses 3-amino-2-oxopropyl phosphate + 1-deoxy-D-xylulose 5-phosphate = pyridoxine 5'-phosphate + phosphate + 2 H2O + H(+). It participates in cofactor biosynthesis; pyridoxine 5'-phosphate biosynthesis; pyridoxine 5'-phosphate from D-erythrose 4-phosphate: step 5/5. Catalyzes the complicated ring closure reaction between the two acyclic compounds 1-deoxy-D-xylulose-5-phosphate (DXP) and 3-amino-2-oxopropyl phosphate (1-amino-acetone-3-phosphate or AAP) to form pyridoxine 5'-phosphate (PNP) and inorganic phosphate. In Rhodopseudomonas palustris (strain BisB18), this protein is Pyridoxine 5'-phosphate synthase.